Reading from the N-terminus, the 409-residue chain is Pentatricopeptide repeat-containing protein At1g01970 (409 aa).

PPR repeat units follow at residues 164–198 (NARD…GFLI), 199–233 (DQVT…GEPL), 234–268 (DYRS…EICA), 269–303 (GREV…GITP), 304–338 (DVKL…GIKA), and 339–373 (TDKC…SIML).

The protein belongs to the PPR family. P subfamily.

This is Pentatricopeptide repeat-containing protein At1g01970 from Arabidopsis thaliana (Mouse-ear cress).